A 325-amino-acid polypeptide reads, in one-letter code: Dehydrogenase/reductase SDR family member 7B (325 aa).

Residues Met1–Asp17 lie on the Cytoplasmic side of the membrane. A helical; Signal-anchor for type II membrane protein membrane pass occupies residues Leu18 to Phe38. The Lumenal segment spans residues Arg39 to Ser325. 2 residues coordinate NAD(+): Ser62 and Leu64. Position 194 (Ser194) interacts with substrate. 3 residues coordinate NAD(+): Tyr207, Lys211, and Thr242. The Proton acceptor role is filled by Tyr207.

It belongs to the short-chain dehydrogenases/reductases (SDR) family.

It is found in the endoplasmic reticulum membrane. Functionally, putative oxidoreductase. The sequence is that of Dehydrogenase/reductase SDR family member 7B (Dhrs7b) from Rattus norvegicus (Rat).